A 133-amino-acid polypeptide reads, in one-letter code: Small ribosomal subunit protein uS11 (133 aa).

Residues 1-23 form a disordered region; it reads MPPKTRGAVRKPRKKDKKNIALG. The segment covering 7–17 has biased composition (basic residues); the sequence is GAVRKPRKKDK.

This sequence belongs to the universal ribosomal protein uS11 family. Part of the 30S ribosomal subunit. Interacts with proteins S7 and S18. Binds to IF-3.

Located on the platform of the 30S subunit, it bridges several disparate RNA helices of the 16S rRNA. Forms part of the Shine-Dalgarno cleft in the 70S ribosome. This Arthrobacter sp. (strain FB24) protein is Small ribosomal subunit protein uS11.